The following is a 3630-amino-acid chain: Trimeric autotransporter adhesin AtaA (3630 aa).

Positions 1 to 23 are cleaved as a signal peptide; sequence MNKIYKVIWNATLLAWVAVSELA. Residues 24–3487 form a surface exposed passenger domain region; sequence KGKTKSTTSK…TNQAVVNYLG (3464 aa). Residues 108–315 form an N-terminal YadA-like head region; sequence SIAIGENAQG…ASDAVTVAQL (208 aa). The interval 316–2904 is N-terminal stalk; it reads DKAYDDTNGR…GRAATEEQLK (2589 aa). Residues 2905–3169 form a C-terminal YadA-like head region; the sequence is AVITSNITEV…DSDAVNVAQL (265 aa). Residues 3170–3561 are C-terminal stalk; sequence KAVGNQVVTT…DVEKKANAGI (392 aa). The outer membrane translocation of the passenger domain stretch occupies residues 3539 to 3574; it reads LDNAFRITNNRIDDVEKKANAGIAAAMALESAPYVP. 4 beta stranded membrane-spanning segments follow: residues 3575–3585, 3589–3599, 3608–3614, and 3618–3629; these read GKYTYAAGAAY, ENAVGVTLRKT, TGGVAAA, and DASVRIGISGVI. The interval 3575 to 3630 is translocator domain; it reads GKYTYAAGAAYHGGENAVGVTLRKTADNGRWSITGGVAAASQGDASVRIGISGVID.

It belongs to the autotransporter-2 (AT-2) (TC 1.B.40) family. As to quaternary structure, homotrimer. Interacts with TpgA.

It is found in the cell surface. The protein localises to the cell outer membrane. In terms of biological role, responsible for autoagglutination, and for adhesion to abiotic and biotic surfaces such as polystyrene (PS), type I collagen, polypropylene (PP), polyvinylchloride (PVC), glass and stainless steel (SS). Adhesion is much stronger than that mediated by Yersinia YadA in a comparative assay. Confers autoagglutination and binding to PS, type I collagen, PP, PVC, glass and SS upon expression in Acinetobacter baylyi strain ADP1. Involved in rapid, irreversible adherence to polyurethane. Forms an unusual biofilm. An extended, surface exposed fiber binds to quartz crystals, PS and glass. It can be removed by washing in distilled water. The sequence is that of Trimeric autotransporter adhesin AtaA from Acinetobacter sp. (strain Tol 5).